The following is a 302-amino-acid chain: Oxaloacetate decarboxylase 2 (302 aa).

Ser50 lines the substrate pocket. Mg(2+) is bound at residue Asp88. Substrate is bound by residues Arg159 and His235.

The protein belongs to the isocitrate lyase/PEP mutase superfamily. Oxaloacetate decarboxylase family. As to quaternary structure, homotetramer; dimer of dimers. It depends on Mg(2+) as a cofactor.

The catalysed reaction is oxaloacetate + H(+) = pyruvate + CO2. Functionally, catalyzes the decarboxylation of oxaloacetate into pyruvate. Seems to play a role in maintaining cellular concentrations of bicarbonate and pyruvate. The sequence is that of Oxaloacetate decarboxylase 2 from Pseudomonas putida (strain W619).